A 5628-amino-acid polypeptide reads, in one-letter code: Polyketide synthase ThaG (5628 aa).

Residues His13–Glu448 form the Ketosynthase family 3 (KS3) 1 domain. Active-site for beta-ketoacyl synthase 1 activity residues include Cys184, His319, and His361. 2 disordered regions span residues Gly552–Thr613 and Ala1156–Ala1183. Residues Gly559–Arg589 are compositionally biased toward basic and acidic residues. The span at Ala1156–Asp1173 shows a compositional bias: low complexity. The segment covering Ala1174–Ala1183 has biased composition (basic and acidic residues). Residues Ala1209–Leu1286 form the Carrier 1 domain. Ser1246 is modified (O-(pantetheine 4'-phosphoryl)serine). The Ketosynthase family 3 (KS3) 2 domain maps to Tyr1373 to Ala1781. Active-site for beta-ketoacyl synthase 2 activity residues include Cys1529, His1664, and His1704. Residues Ala1967–Ala2099 are N-terminal hotdog fold 1. Residues Ala1967–Ala2261 enclose the PKS/mFAS DH 1 domain. His1999 (proton acceptor; for dehydratase activity 1) is an active-site residue. The C-terminal hotdog fold 1 stretch occupies residues Ala2113–Ala2261. The active-site Proton donor; for dehydratase activity 1 is Asp2175. The tract at residues Asp2426–Asp2446 is disordered. In terms of domain architecture, Carrier 2 spans Pro2702–Ala2780. A disordered region spans residues Thr2817 to Ser2836. A compositionally biased stretch (low complexity) spans Gly2822–Gly2835. One can recognise a Carrier 3 domain in the interval Ala2862–His2935. At Ser2896 the chain carries O-(pantetheine 4'-phosphoryl)serine. The Ketosynthase family 3 (KS3) 3 domain maps to Ala3005–Glu3430. Catalysis depends on for beta-ketoacyl synthase 3 activity residues Cys3175, His3310, and His3351. The segment at Pro3526–Gly3546 is disordered. The tract at residues His3621–Gly3743 is N-terminal hotdog fold 2. The PKS/mFAS DH 2 domain maps to His3621–Ala3895. His3650 functions as the Proton acceptor; for dehydratase activity 2 in the catalytic mechanism. The C-terminal hotdog fold 2 stretch occupies residues Arg3758–Ala3895. Catalysis depends on Asp3818, which acts as the Proton donor; for dehydratase activity 2. Residues Pro3917–Thr3942 form a disordered region. Residues Thr4840 to Leu4914 form the Carrier 4 domain. Ser4874 is subject to O-(pantetheine 4'-phosphoryl)serine. The segment at Ala4960–Pro4992 is disordered. The 427-residue stretch at Ser4998–Glu5424 folds into the Ketosynthase family 3 (KS3) 4 domain. Residues Cys5158, His5293, and His5339 each act as for beta-ketoacyl synthase 4 activity in the active site. One can recognise a Carrier 5 domain in the interval Ala5470–Ile5544. Ser5504 carries the O-(pantetheine 4'-phosphoryl)serine modification. Residues Val5573–Ala5603 are disordered.

Pantetheine 4'-phosphate is required as a cofactor.

Its subcellular location is the cytoplasm. Its pathway is antibiotic biosynthesis. Functionally, involved in production of the polyketide antibiotic thailandamide. In Burkholderia thailandensis (strain ATCC 700388 / DSM 13276 / CCUG 48851 / CIP 106301 / E264), this protein is Polyketide synthase ThaG.